The chain runs to 410 residues: Multifunctional CCA protein (410 aa).

Positions 8 and 11 each coordinate ATP. Residues glycine 8 and arginine 11 each contribute to the CTP site. Residues aspartate 21 and aspartate 23 each coordinate Mg(2+). 3 residues coordinate ATP: arginine 91, arginine 138, and arginine 141. Residues arginine 91, arginine 138, and arginine 141 each contribute to the CTP site. One can recognise an HD domain in the interval 229–347 (TGIHQEMVSD…AQLALVCEAD (119 aa)).

It belongs to the tRNA nucleotidyltransferase/poly(A) polymerase family. Bacterial CCA-adding enzyme type 1 subfamily. Monomer. Can also form homodimers and oligomers. Mg(2+) is required as a cofactor. The cofactor is Ni(2+).

It carries out the reaction a tRNA precursor + 2 CTP + ATP = a tRNA with a 3' CCA end + 3 diphosphate. The enzyme catalyses a tRNA with a 3' CCA end + 2 CTP + ATP = a tRNA with a 3' CCACCA end + 3 diphosphate. Functionally, catalyzes the addition and repair of the essential 3'-terminal CCA sequence in tRNAs without using a nucleic acid template. Adds these three nucleotides in the order of C, C, and A to the tRNA nucleotide-73, using CTP and ATP as substrates and producing inorganic pyrophosphate. tRNA 3'-terminal CCA addition is required both for tRNA processing and repair. Also involved in tRNA surveillance by mediating tandem CCA addition to generate a CCACCA at the 3' terminus of unstable tRNAs. While stable tRNAs receive only 3'-terminal CCA, unstable tRNAs are marked with CCACCA and rapidly degraded. The sequence is that of Multifunctional CCA protein from Xanthomonas oryzae pv. oryzae (strain MAFF 311018).